Here is a 137-residue protein sequence, read N- to C-terminus: Nucleoside diphosphate kinase (137 aa).

ATP contacts are provided by Lys-9, Phe-57, Arg-85, Thr-91, Arg-102, and Asn-112. His-115 serves as the catalytic Pros-phosphohistidine intermediate.

It belongs to the NDK family. Homotetramer. It depends on Mg(2+) as a cofactor.

It localises to the cytoplasm. It carries out the reaction a 2'-deoxyribonucleoside 5'-diphosphate + ATP = a 2'-deoxyribonucleoside 5'-triphosphate + ADP. The catalysed reaction is a ribonucleoside 5'-diphosphate + ATP = a ribonucleoside 5'-triphosphate + ADP. Major role in the synthesis of nucleoside triphosphates other than ATP. The ATP gamma phosphate is transferred to the NDP beta phosphate via a ping-pong mechanism, using a phosphorylated active-site intermediate. This is Nucleoside diphosphate kinase from Sulfurimonas denitrificans (strain ATCC 33889 / DSM 1251) (Thiomicrospira denitrificans (strain ATCC 33889 / DSM 1251)).